Reading from the N-terminus, the 547-residue chain is MKLTKWALPLFFLLFYLLPLDQRPLWSPDENRYAEISREMVSTGDWVVPHFLGLRYFEKPIAGYWFNSISQQLFGDTNFAVRFASAAATGLSALLIVWFALQLWQCRRKAFLAGLIYLSLLIVYGIGTYSVLDAMVTLWLNAAMVSFYLIRQEGPLRTRVAGYLLFGLACGMGFLTKGFIALAVPVIVIVPYVIYQRRLPELLRFGPLAMVSAALLAAPWAIAVHLREPDYWHYFFWVEHIQRFAADNAQHKAPFWYYLPMGLLGTLPWLGLLPGALRKGWQDRKISPETLYLLAWVVLPLLFFSVAKGKLLTYILPCFAPLAMLLAASAVDLLKEGKERAFRVNAWLNGLFGLICLAVLAVLALSPSHAVYGEEDHGALAVAMVIFAGWALLGFIQLKDVSRRWTLSALCPMVLAVGLPWALPQSLIDSKLPERFIEANQTVLMDSSSLLANDVGLASSLAWGTRRSEIQLFDSKGEVHYGLSYPDAKERYVTRSDFPAWLAEARKNGQVALLLKTDKDGSTGSLPPADETIVSHRLTLLVYHGAR.

11 helical membrane-spanning segments follow: residues 1 to 21 (MKLTKWALPLFFLLFYLLPLD), 83 to 103 (FASAAATGLSALLIVWFALQL), 111 to 131 (FLAGLIYLSLLIVYGIGTYSV), 174 to 194 (FLTKGFIALAVPVIVIVPYVI), 205 to 225 (FGPLAMVSAALLAAPWAIAVH), 253 to 273 (APFWYYLPMGLLGTLPWLGLL), 286 to 306 (ISPETLYLLAWVVLPLLFFSV), 311 to 331 (LLTYILPCFAPLAMLLAASAV), 346 to 366 (AWLNGLFGLICLAVLAVLALS), 378 to 398 (GALAVAMVIFAGWALLGFIQL), and 408 to 428 (SALCPMVLAVGLPWALPQSLI).

Belongs to the glycosyltransferase 83 family.

The protein resides in the cell inner membrane. The catalysed reaction is 4-amino-4-deoxy-alpha-L-arabinopyranosyl di-trans,octa-cis-undecaprenyl phosphate + lipid IVA = lipid IIA + di-trans,octa-cis-undecaprenyl phosphate.. It participates in lipopolysaccharide metabolism; 4-amino-4-deoxy-beta-L-arabinose-lipid A biosynthesis. In terms of biological role, catalyzes the transfer of the L-Ara4N moiety of the glycolipid undecaprenyl phosphate-alpha-L-Ara4N to lipid A. The modified arabinose is attached to lipid A and is required for resistance to polymyxin and cationic antimicrobial peptides. In Aeromonas salmonicida (strain A449), this protein is Undecaprenyl phosphate-alpha-4-amino-4-deoxy-L-arabinose arabinosyl transferase.